The following is a 100-amino-acid chain: NADH-quinone oxidoreductase subunit K (100 aa).

Helical transmembrane passes span 4–24 (LTHGLILAAILFVLGLTGLVI), 28–48 (LLFMLIGLEIMINASALAFVV), and 60–80 (VMYILAISLAAAEASIGLALL).

The protein belongs to the complex I subunit 4L family. As to quaternary structure, NDH-1 is composed of 13 different subunits. Subunits NuoA, H, J, K, L, M, N constitute the membrane sector of the complex.

The protein localises to the cell inner membrane. The enzyme catalyses a quinone + NADH + 5 H(+)(in) = a quinol + NAD(+) + 4 H(+)(out). NDH-1 shuttles electrons from NADH, via FMN and iron-sulfur (Fe-S) centers, to quinones in the respiratory chain. The immediate electron acceptor for the enzyme in this species is believed to be ubiquinone. Couples the redox reaction to proton translocation (for every two electrons transferred, four hydrogen ions are translocated across the cytoplasmic membrane), and thus conserves the redox energy in a proton gradient. This is NADH-quinone oxidoreductase subunit K from Salmonella agona (strain SL483).